Reading from the N-terminus, the 311-residue chain is Phospholipid phosphatase 3 (311 aa).

Residues 1–33 lie on the Cytoplasmic side of the membrane; it reads MQNYKYDKAIVAESKNGGSPALNNNPRKGGSKR. Phosphoserine is present on serine 19. The chain crosses the membrane as a helical span at residues 34 to 54; that stretch reads VLLICLDLFCLFMAGLPFIII. At 55-85 the chain is on the extracellular side; that stretch reads ETSTIKPYHRGFYCNDESIKYPQKTGETIND. Residues 86 to 106 form a helical membrane-spanning segment; that stretch reads AVLTAVGIVIAILAIITGEFY. The Cytoplasmic portion of the chain corresponds to 107–123; that stretch reads RIYYLKEKSRSTIQNPY. A Dityrosine basolateral targeting motif motif is present at residues 109 to 110; sequence YY. A helical transmembrane segment spans residues 124 to 144; that stretch reads VAALYKQVGCFLFGCAISQSF. At 145–194 the chain is on the extracellular side; that stretch reads TDIAKVSIGRLRPHFLNVCNPDFSQINCSVGYIQNYRCRGEDSKVQEARK. The tract at residues 149–157 is phosphatase sequence motif I; it reads KVSIGRLRP. A glycan (N-linked (GlcNAc...) asparagine) is linked at asparagine 171. Residues 183-185 carry the Integrin-binding motif motif; the sequence is RGE. The chain crosses the membrane as a helical span at residues 195–215; sequence SFFSGHASFSMYTMLYLVLYL. The tract at residues 197–200 is phosphatase sequence motif II; that stretch reads FSGH. The active-site Proton donors is the histidine 200. Over 216–226 the chain is Cytoplasmic; that stretch reads QARFTWRGARL. The chain crosses the membrane as a helical span at residues 227-244; sequence LRPLLQFTLIMMAFYTGL. The segment at 245–256 is phosphatase sequence motif III; the sequence is SRVSDHKHHPSD. Topologically, residues 245-258 are extracellular; it reads SRVSDHKHHPSDVL. Histidine 252 (nucleophile) is an active-site residue. A helical membrane pass occupies residues 259 to 279; it reads AGFAQGALVACCIVFFVSDLF. A mediates interaction with CTNND1 region spans residues 276-311; the sequence is SDLFKTKTTLSLPPSAIRKDMLSPVDIDRSNHHNMV. The Cytoplasmic segment spans residues 280-311; the sequence is KTKTTLSLPPSAIRKDMLSPVDIDRSNHHNMV.

Belongs to the PA-phosphatase related phosphoesterase family. In terms of assembly, forms functional homodimers and homooligomers that are not required for substrate recognition and catalytic activity. Can also form heterooligomers with other PLPP2 and PLPP3. Interacts with CTNND1; negatively regulates the PLPP3-mediated stabilization of beta-catenin/CTNNB1. In terms of processing, N-glycosylated. Contains high-mannose oligosaccharides.

The protein localises to the cell membrane. It is found in the basolateral cell membrane. Its subcellular location is the endoplasmic reticulum membrane. The protein resides in the endoplasmic reticulum-Golgi intermediate compartment membrane. It localises to the golgi apparatus membrane. The protein localises to the golgi apparatus. It is found in the trans-Golgi network membrane. Its subcellular location is the membrane raft. It carries out the reaction a 1,2-diacyl-sn-glycero-3-phosphate + H2O = a 1,2-diacyl-sn-glycerol + phosphate. The catalysed reaction is 1,2-dihexadecanoyl-sn-glycero-3-phosphate + H2O = 1,2-dihexadecanoyl-sn-glycerol + phosphate. The enzyme catalyses 1,2-di-(9Z-octadecenoyl)-sn-glycero-3-phosphate + H2O = 1,2-di-(9Z-octadecenoyl)-sn-glycerol + phosphate. It catalyses the reaction a monoacyl-sn-glycero-3-phosphate + H2O = a monoacylglycerol + phosphate. It carries out the reaction (9Z)-octadecenoyl-sn-glycero-3-phosphate + H2O = (9Z-octadecenoyl)-glycerol + phosphate. The catalysed reaction is sphing-4-enine 1-phosphate + H2O = sphing-4-enine + phosphate. The enzyme catalyses an N-acylsphing-4-enine 1-phosphate + H2O = an N-acylsphing-4-enine + phosphate. It catalyses the reaction N-(octanoyl)-sphing-4-enine-1-phosphate + H2O = N-octanoylsphing-4-enine + phosphate. It carries out the reaction N-(9Z-octadecenoyl)-ethanolamine phosphate + H2O = N-(9Z-octadecenoyl) ethanolamine + phosphate. Its pathway is lipid metabolism; phospholipid metabolism. With respect to regulation, magnesium-independent phospholipid phosphatase. Insensitive to N-ethylmaleimide. Inhibited by sphingosine, zinc ions and modestly by propanolol. In terms of biological role, magnesium-independent phospholipid phosphatase of the plasma membrane that catalyzes the dephosphorylation of a variety of glycerolipid and sphingolipid phosphate esters including phosphatidate/PA, lysophosphatidate/LPA, diacylglycerol pyrophosphate/DGPP, sphingosine 1-phosphate/S1P and ceramide 1-phosphate/C1P. Also acts on N-oleoyl ethanolamine phosphate/N-(9Z-octadecenoyl)-ethanolamine phosphate, a potential physiological compound. Has both an extracellular and an intracellular phosphatase activity, allowing the hydrolysis and the cellular uptake of these bioactive lipid mediators from the milieu, regulating signal transduction in different cellular processes. Through the dephosphorylation of extracellular sphingosine-1-phosphate and the regulation of its extra- and intracellular availability, plays a role in vascular homeostasis, regulating endothelial cell migration, adhesion, survival, proliferation and the production of pro-inflammatory cytokines. By maintaining the appropriate levels of this lipid in the cerebellum, also ensure its proper development and function. Through its intracellular lipid phosphatase activity may act in early compartments of the secretory pathway, regulating the formation of Golgi to endoplasmic reticulum retrograde transport carriers. Functionally, independently of this phosphatase activity may also function in the Wnt signaling pathway and the stabilization of beta-catenin/CTNNB1, thereby regulating cell proliferation, migration and differentiation in angiogenesis or yet in tumor growth. Also plays a role in integrin-mediated cell-cell adhesion in angiogenesis. The sequence is that of Phospholipid phosphatase 3 from Bos taurus (Bovine).